A 692-amino-acid chain; its full sequence is Glycine--tRNA ligase beta subunit (692 aa).

Belongs to the class-II aminoacyl-tRNA synthetase family. In terms of assembly, tetramer of two alpha and two beta subunits.

The protein resides in the cytoplasm. It catalyses the reaction tRNA(Gly) + glycine + ATP = glycyl-tRNA(Gly) + AMP + diphosphate. The chain is Glycine--tRNA ligase beta subunit from Alteromonas mediterranea (strain DSM 17117 / CIP 110805 / LMG 28347 / Deep ecotype).